A 215-amino-acid chain; its full sequence is Cytochrome b6 (215 aa).

Residues 32–52 (IFYCLGGITLTCFLVQVATGF) form a helical membrane-spanning segment. Position 35 (cysteine 35) interacts with heme c. Heme b contacts are provided by histidine 86 and histidine 100. The next 3 membrane-spanning stretches (helical) occupy residues 90–110 (ASMM…TGGF), 116–136 (LTWV…VTGY), and 186–206 (LHTF…FLMI). Residues histidine 187 and histidine 202 each coordinate heme b.

It belongs to the cytochrome b family. PetB subfamily. As to quaternary structure, the 4 large subunits of the cytochrome b6-f complex are cytochrome b6, subunit IV (17 kDa polypeptide, PetD), cytochrome f and the Rieske protein, while the 4 small subunits are PetG, PetL, PetM and PetN. The complex functions as a dimer. Requires heme b as cofactor. Heme c serves as cofactor.

Its subcellular location is the plastid. The protein resides in the chloroplast thylakoid membrane. Functionally, component of the cytochrome b6-f complex, which mediates electron transfer between photosystem II (PSII) and photosystem I (PSI), cyclic electron flow around PSI, and state transitions. The polypeptide is Cytochrome b6 (Ostreococcus tauri).